Reading from the N-terminus, the 412-residue chain is Glucose-1-phosphate adenylyltransferase (412 aa).

Alpha-D-glucose 1-phosphate is bound by residues Y98, G163, 178–179 (EK), and S189.

This sequence belongs to the bacterial/plant glucose-1-phosphate adenylyltransferase family. In terms of assembly, homotetramer.

The catalysed reaction is alpha-D-glucose 1-phosphate + ATP + H(+) = ADP-alpha-D-glucose + diphosphate. It participates in glycan biosynthesis; glycogen biosynthesis. Its function is as follows. Involved in the biosynthesis of ADP-glucose, a building block required for the elongation reactions to produce glycogen. Catalyzes the reaction between ATP and alpha-D-glucose 1-phosphate (G1P) to produce pyrophosphate and ADP-Glc. This is Glucose-1-phosphate adenylyltransferase from Thermosipho melanesiensis (strain DSM 12029 / CIP 104789 / BI429).